Here is a 279-residue protein sequence, read N- to C-terminus: Thymidylate synthase (279 aa).

DUMP is bound at residue 133–134 (RR). The Nucleophile role is filled by Cys-154. Residues 178–181 (RSND), Asn-189, and 219–221 (HIY) each bind dUMP. Asp-181 lines the (6R)-5,10-methylene-5,6,7,8-tetrahydrofolate pocket. Ala-278 is a binding site for (6R)-5,10-methylene-5,6,7,8-tetrahydrofolate.

The protein belongs to the thymidylate synthase family. Bacterial-type ThyA subfamily. Homodimer.

It localises to the cytoplasm. It carries out the reaction dUMP + (6R)-5,10-methylene-5,6,7,8-tetrahydrofolate = 7,8-dihydrofolate + dTMP. It functions in the pathway pyrimidine metabolism; dTTP biosynthesis. Functionally, catalyzes the reductive methylation of 2'-deoxyuridine-5'-monophosphate (dUMP) to 2'-deoxythymidine-5'-monophosphate (dTMP) while utilizing 5,10-methylenetetrahydrofolate (mTHF) as the methyl donor and reductant in the reaction, yielding dihydrofolate (DHF) as a by-product. This enzymatic reaction provides an intracellular de novo source of dTMP, an essential precursor for DNA biosynthesis. In Streptococcus gordonii (strain Challis / ATCC 35105 / BCRC 15272 / CH1 / DL1 / V288), this protein is Thymidylate synthase.